Here is a 232-residue protein sequence, read N- to C-terminus: Probable GTP-binding protein EngB (232 aa).

In terms of domain architecture, EngB-type G spans I13–Y188. GTP-binding positions include G21 to S28, G48 to M52, D67 to G70, T134 to D137, and F167 to A169. Mg(2+) is bound by residues S28 and T50.

This sequence belongs to the TRAFAC class TrmE-Era-EngA-EngB-Septin-like GTPase superfamily. EngB GTPase family. Mg(2+) is required as a cofactor.

In terms of biological role, necessary for normal cell division and for the maintenance of normal septation. This chain is Probable GTP-binding protein EngB, found in Psychrobacter arcticus (strain DSM 17307 / VKM B-2377 / 273-4).